Consider the following 90-residue polypeptide: DNA-directed RNA polymerase subunit omega (90 aa).

This sequence belongs to the RNA polymerase subunit omega family. As to quaternary structure, the RNAP catalytic core consists of 2 alpha, 1 beta, 1 beta' and 1 omega subunit. When a sigma factor is associated with the core the holoenzyme is formed, which can initiate transcription.

It carries out the reaction RNA(n) + a ribonucleoside 5'-triphosphate = RNA(n+1) + diphosphate. Promotes RNA polymerase assembly. Latches the N- and C-terminal regions of the beta' subunit thereby facilitating its interaction with the beta and alpha subunits. The protein is DNA-directed RNA polymerase subunit omega of Rhodopirellula baltica (strain DSM 10527 / NCIMB 13988 / SH1).